The chain runs to 1057 residues: Probable E3 ubiquitin-protein ligase HERC4 (1057 aa).

7 RCC1 repeats span residues 1 to 51 (MLCW…FVLD), 52 to 101 (DGTV…ALND), 102 to 154 (KGQV…ALSK), 156 to 207 (SEVF…VLTL), 208 to 259 (SGAI…ALTK), 261 to 311 (GGVF…AFVP), and 313 to 366 (SGRI…CVKR). An HECT domain is found at 730–1057 (KNIDYKKPLK…IDHNEGFSLI (328 aa)). Catalysis depends on Cys1025, which acts as the Glycyl thioester intermediate.

The protein resides in the cytoplasm. It localises to the cytosol. The enzyme catalyses S-ubiquitinyl-[E2 ubiquitin-conjugating enzyme]-L-cysteine + [acceptor protein]-L-lysine = [E2 ubiquitin-conjugating enzyme]-L-cysteine + N(6)-ubiquitinyl-[acceptor protein]-L-lysine.. It functions in the pathway protein modification; protein ubiquitination. Functionally, probable E3 ubiquitin-protein ligase involved in either protein trafficking or in the distribution of cellular structures. Required for spermatozoon maturation and fertility, and for the removal of the cytoplasmic droplet of the spermatozoon. E3 ubiquitin-protein ligases accept ubiquitin from an E2 ubiquitin-conjugating enzyme in the form of a thioester and then directly transfer it to targeted substrates. This Rattus norvegicus (Rat) protein is Probable E3 ubiquitin-protein ligase HERC4 (Herc4).